An 806-amino-acid polypeptide reads, in one-letter code: N-terminal kinase-like protein (806 aa).

The Protein kinase domain occupies 14–314 (FELSPEPPEG…PEDFCRHKVL (301 aa)). HEAT repeat units lie at residues 350–388 (IIPV…VNTQ), 389–427 (IFPH…LNVE), and 507–545 (ILPV…EDPT). Disordered stretches follow at residues 586–642 (RAHP…TADR) and 663–806 (DDWS…RKLD). Residues 601–611 (RPVPEGNPAPA) are compositionally biased toward pro residues. Ser-752 carries the post-translational modification Phosphoserine. The span at 752 to 762 (SWGEDNWEGLE) shows a compositional bias: acidic residues. Positions 755-795 (EDNWEGLEAESRQVKAELARKKREERRREMEAKRAEKKTTK) form a coiled coil. Composition is skewed to basic and acidic residues over residues 763 to 773 (AESRQVKAELA) and 780 to 793 (RRRE…EKKT). Residues 791–806 (KKTTKGPMKLGARKLD) form an interaction with COPB1 region.

It belongs to the protein kinase superfamily. In terms of assembly, homooligomer. Interacts with GORAB. Interacts with COPA, COPB1 and COPB2. Interacts with AP2B1. Expressed in diaphragm, quadriceps, thymus, liver, lung, spleen, kidney, heart and brain. Prominently expressed in neurons, and enriched at central nervous system synapses and neuromuscular junctions.

Its subcellular location is the cytoplasm. The protein resides in the cytoskeleton. It localises to the microtubule organizing center. It is found in the centrosome. The protein localises to the endoplasmic reticulum-Golgi intermediate compartment. Its subcellular location is the golgi apparatus. The protein resides in the cis-Golgi network. Regulates COPI-mediated retrograde protein traffic at the interface between the Golgi apparatus and the endoplasmic reticulum. Involved in the maintenance of the Golgi apparatus morphology. This chain is N-terminal kinase-like protein (Scyl1), found in Mus musculus (Mouse).